A 95-amino-acid chain; its full sequence is Large ribosomal subunit protein bL25 (95 aa).

Belongs to the bacterial ribosomal protein bL25 family. As to quaternary structure, part of the 50S ribosomal subunit; part of the 5S rRNA/L5/L18/L25 subcomplex. Contacts the 5S rRNA. Binds to the 5S rRNA independently of L5 and L18.

Its function is as follows. This is one of the proteins that binds to the 5S RNA in the ribosome where it forms part of the central protuberance. The polypeptide is Large ribosomal subunit protein bL25 (Buchnera aphidicola subsp. Acyrthosiphon pisum (strain 5A)).